The chain runs to 130 residues: Small ribosomal subunit protein uS11 (130 aa).

This sequence belongs to the universal ribosomal protein uS11 family. Part of the 30S ribosomal subunit. Interacts with proteins S7 and S18. Binds to IF-3.

Located on the platform of the 30S subunit, it bridges several disparate RNA helices of the 16S rRNA. Forms part of the Shine-Dalgarno cleft in the 70S ribosome. In Prochlorococcus marinus (strain MIT 9313), this protein is Small ribosomal subunit protein uS11.